Reading from the N-terminus, the 406-residue chain is S-adenosylmethionine synthase (406 aa).

Position 17 (H17) interacts with ATP. Residue D19 coordinates Mg(2+). K(+) is bound at residue E45. The L-methionine site is built by E58 and Q101. The segment at 101 to 111 (QSAEINQGVAR) is flexible loop. Residues 178 to 180 (DGK), D258, 264 to 265 (RK), A281, and K285 each bind ATP. D258 provides a ligand contact to L-methionine. K289 is a binding site for L-methionine.

It belongs to the AdoMet synthase family. Homotetramer; dimer of dimers. The cofactor is Mg(2+). It depends on K(+) as a cofactor.

It is found in the cytoplasm. It carries out the reaction L-methionine + ATP + H2O = S-adenosyl-L-methionine + phosphate + diphosphate. It participates in amino-acid biosynthesis; S-adenosyl-L-methionine biosynthesis; S-adenosyl-L-methionine from L-methionine: step 1/1. In terms of biological role, catalyzes the formation of S-adenosylmethionine (AdoMet) from methionine and ATP. The overall synthetic reaction is composed of two sequential steps, AdoMet formation and the subsequent tripolyphosphate hydrolysis which occurs prior to release of AdoMet from the enzyme. This is S-adenosylmethionine synthase from Bifidobacterium longum subsp. infantis (strain ATCC 15697 / DSM 20088 / JCM 1222 / NCTC 11817 / S12).